The primary structure comprises 429 residues: Histidinol dehydrogenase (429 aa).

The NAD(+) site is built by Tyr-127, Gln-188, and Asn-211. Positions 234, 256, and 259 each coordinate substrate. Positions 256 and 259 each coordinate Zn(2+). Catalysis depends on proton acceptor residues Glu-324 and His-325. Positions 325, 358, 412, and 417 each coordinate substrate. Zn(2+) is bound at residue Asp-358. Zn(2+) is bound at residue His-417.

This sequence belongs to the histidinol dehydrogenase family. It depends on Zn(2+) as a cofactor.

It catalyses the reaction L-histidinol + 2 NAD(+) + H2O = L-histidine + 2 NADH + 3 H(+). It functions in the pathway amino-acid biosynthesis; L-histidine biosynthesis; L-histidine from 5-phospho-alpha-D-ribose 1-diphosphate: step 9/9. In terms of biological role, catalyzes the sequential NAD-dependent oxidations of L-histidinol to L-histidinaldehyde and then to L-histidine. This chain is Histidinol dehydrogenase, found in Bacillus cereus (strain ATCC 10987 / NRS 248).